The chain runs to 190 residues: dCTP deaminase (190 aa).

113–118 (KSTYAR) contributes to the dCTP binding site. The active-site Proton donor/acceptor is the Glu-139. Positions 158, 172, 181, and 182 each coordinate dCTP.

This sequence belongs to the dCTP deaminase family. Homotrimer.

The enzyme catalyses dCTP + H2O + H(+) = dUTP + NH4(+). It functions in the pathway pyrimidine metabolism; dUMP biosynthesis; dUMP from dCTP (dUTP route): step 1/2. Functionally, catalyzes the deamination of dCTP to dUTP. The protein is dCTP deaminase of Chlamydia trachomatis serovar A (strain ATCC VR-571B / DSM 19440 / HAR-13).